A 357-amino-acid polypeptide reads, in one-letter code: Peptide chain release factor 1 (357 aa).

Gln-234 bears the N5-methylglutamine mark. The tract at residues 282-313 (DSKKQEQRSNNRKQQVGSGDRSERIRTYNFPQ) is disordered.

Belongs to the prokaryotic/mitochondrial release factor family. Post-translationally, methylated by PrmC. Methylation increases the termination efficiency of RF1.

It is found in the cytoplasm. Functionally, peptide chain release factor 1 directs the termination of translation in response to the peptide chain termination codons UAG and UAA. This Borreliella afzelii (strain PKo) (Borrelia afzelii) protein is Peptide chain release factor 1.